The sequence spans 109 residues: Nucleoid-associated protein Caul_4574 (109 aa).

This sequence belongs to the YbaB/EbfC family. Homodimer.

It is found in the cytoplasm. The protein localises to the nucleoid. Functionally, binds to DNA and alters its conformation. May be involved in regulation of gene expression, nucleoid organization and DNA protection. This chain is Nucleoid-associated protein Caul_4574, found in Caulobacter sp. (strain K31).